The chain runs to 181 residues: Ribulose bisphosphate carboxylase small subunit, chloroplastic 2 (181 aa).

The transit peptide at 1 to 57 directs the protein to the chloroplast; the sequence is MASSVISSAAVATRTNVTQAGSMIAPFTGLKSAATFPVSRKQNLDITSIASNGGRVR.

This sequence belongs to the RuBisCO small chain family. As to quaternary structure, heterohexadecamer of 8 large and 8 small subunits.

Its subcellular location is the plastid. The protein localises to the chloroplast. RuBisCO catalyzes two reactions: the carboxylation of D-ribulose 1,5-bisphosphate, the primary event in carbon dioxide fixation, as well as the oxidative fragmentation of the pentose substrate. Both reactions occur simultaneously and in competition at the same active site. Although the small subunit is not catalytic it is essential for maximal activity. The sequence is that of Ribulose bisphosphate carboxylase small subunit, chloroplastic 2 from Solanum tuberosum (Potato).